Reading from the N-terminus, the 358-residue chain is Porphobilinogen deaminase, chloroplastic (358 aa).

An N-terminal signal peptide occupies residues 1–24 (MPPPPRCAATTAHHSLLGSPTCLA). At Cys290 the chain carries S-(dipyrrolylmethanemethyl)cysteine.

This sequence belongs to the HMBS family. Dipyrromethane is required as a cofactor.

The protein localises to the plastid. The protein resides in the chloroplast. The catalysed reaction is 4 porphobilinogen + H2O = hydroxymethylbilane + 4 NH4(+). It participates in porphyrin-containing compound metabolism; protoporphyrin-IX biosynthesis; coproporphyrinogen-III from 5-aminolevulinate: step 2/4. It functions in the pathway porphyrin-containing compound metabolism; chlorophyll biosynthesis. Tetrapolymerization of the monopyrrole PBG into the hydroxymethylbilane pre-uroporphyrinogen in several discrete steps. The protein is Porphobilinogen deaminase, chloroplastic (HEMC) of Oryza sativa subsp. japonica (Rice).